A 570-amino-acid chain; its full sequence is Sulfite reductase [NADPH] hemoprotein beta-component (570 aa).

Residues Cys-434, Cys-440, Cys-479, and Cys-483 each contribute to the [4Fe-4S] cluster site. Cys-483 is a siroheme binding site.

This sequence belongs to the nitrite and sulfite reductase 4Fe-4S domain family. As to quaternary structure, alpha(8)-beta(8). The alpha component is a flavoprotein, the beta component is a hemoprotein. Siroheme serves as cofactor. It depends on [4Fe-4S] cluster as a cofactor.

It catalyses the reaction hydrogen sulfide + 3 NADP(+) + 3 H2O = sulfite + 3 NADPH + 4 H(+). It functions in the pathway sulfur metabolism; hydrogen sulfide biosynthesis; hydrogen sulfide from sulfite (NADPH route): step 1/1. Its function is as follows. Component of the sulfite reductase complex that catalyzes the 6-electron reduction of sulfite to sulfide. This is one of several activities required for the biosynthesis of L-cysteine from sulfate. The protein is Sulfite reductase [NADPH] hemoprotein beta-component of Escherichia coli O17:K52:H18 (strain UMN026 / ExPEC).